The following is a 106-amino-acid chain: Urease subunit beta (106 aa).

This sequence belongs to the urease beta subunit family. In terms of assembly, heterotrimer of UreA (gamma), UreB (beta) and UreC (alpha) subunits. Three heterotrimers associate to form the active enzyme.

The protein resides in the cytoplasm. The catalysed reaction is urea + 2 H2O + H(+) = hydrogencarbonate + 2 NH4(+). It functions in the pathway nitrogen metabolism; urea degradation; CO(2) and NH(3) from urea (urease route): step 1/1. This Klebsiella pneumoniae (strain 342) protein is Urease subunit beta.